We begin with the raw amino-acid sequence, 139 residues long: uncharacterized protein (139 aa).

The chain crosses the membrane as a helical span at residues F43–L59.

It is found in the membrane. This is an uncharacterized protein from Haemophilus influenzae (strain ATCC 51907 / DSM 11121 / KW20 / Rd).